The chain runs to 509 residues: UDP-N-acetylmuramyl-tripeptide synthetase (509 aa).

124–130 (GTNGKTS) is an ATP binding site. UDP-N-acetyl-alpha-D-muramoyl-L-alanyl-D-glutamate is bound by residues 164–165 (TT), S191, and R199. The residue at position 231 (K231) is an N6-carboxylysine.

The protein belongs to the MurCDEF family. MurE subfamily. Post-translationally, carboxylation is probably crucial for Mg(2+) binding and, consequently, for the gamma-phosphate positioning of ATP.

It is found in the cytoplasm. The protein operates within cell wall biogenesis; peptidoglycan biosynthesis. Functionally, catalyzes the addition of an amino acid to the nucleotide precursor UDP-N-acetylmuramoyl-L-alanyl-D-glutamate (UMAG) in the biosynthesis of bacterial cell-wall peptidoglycan. In Tropheryma whipplei (strain Twist) (Whipple's bacillus), this protein is UDP-N-acetylmuramyl-tripeptide synthetase.